The chain runs to 117 residues: Small ribosomal subunit protein bS6 (117 aa).

The tract at residues 96–117 (HAEGPSVQMQKRDERDSRRERR) is disordered. Over residues 105-117 (QKRDERDSRRERR) the composition is skewed to basic and acidic residues.

It belongs to the bacterial ribosomal protein bS6 family.

Binds together with bS18 to 16S ribosomal RNA. The protein is Small ribosomal subunit protein bS6 of Ruegeria pomeroyi (strain ATCC 700808 / DSM 15171 / DSS-3) (Silicibacter pomeroyi).